Reading from the N-terminus, the 219-residue chain is Claudin-20 (219 aa).

At 1–7 (MASAGLQ) the chain is on the cytoplasmic side. A helical membrane pass occupies residues 8 to 28 (LLAFILALSGVSGVLTATLLP). At 29-81 (NWKVNVDVDSNIITAIVQLHGLWMDCTWYSTGMFSCALKHSILSLPIHVQAAR) the chain is on the extracellular side. A helical transmembrane segment spans residues 82–102 (ATMVLACVLSALGICTSTVGM). Residues 103–118 (KCTRLGGDRETKSHAS) are Cytoplasmic-facing. Residues 119 to 139 (FAGGVCFMSAGISSLISTVWY) traverse the membrane as a helical segment. Residues 140-160 (TKEIIANFLDLTVPESNKHEP) are Extracellular-facing. The chain crosses the membrane as a helical span at residues 161–181 (GGAIYIGFISAMLLFISGMIF). Residues 182-219 (CTSCIKRNPEARLDPPTQQPISNTQLENNSTHNLKDYV) lie on the Cytoplasmic side of the membrane. The interval 193–219 (RLDPPTQQPISNTQLENNSTHNLKDYV) is disordered. The span at 200–213 (QPISNTQLENNSTH) shows a compositional bias: polar residues.

The protein belongs to the claudin family.

The protein localises to the cell junction. Its subcellular location is the tight junction. It localises to the cell membrane. Functionally, plays a major role in tight junction-specific obliteration of the intercellular space, through calcium-independent cell-adhesion activity. This chain is Claudin-20 (CLDN20), found in Homo sapiens (Human).